A 313-amino-acid chain; its full sequence is Protoheme IX farnesyltransferase (313 aa).

Helical transmembrane passes span 23 to 43 (ILAY…VTTI), 56 to 76 (PLLI…ANTL), 107 to 127 (LIFG…TANL), 128 to 148 (LSGL…TLVL), 155 to 175 (NVVW…SAVT), 182 to 202 (ALVM…ALAM), 243 to 263 (LALA…VWFL), and 291 to 311 (YLAV…PTLF).

Belongs to the UbiA prenyltransferase family. Protoheme IX farnesyltransferase subfamily.

Its subcellular location is the cell membrane. It catalyses the reaction heme b + (2E,6E)-farnesyl diphosphate + H2O = Fe(II)-heme o + diphosphate. The protein operates within porphyrin-containing compound metabolism; heme O biosynthesis; heme O from protoheme: step 1/1. Functionally, converts heme B (protoheme IX) to heme O by substitution of the vinyl group on carbon 2 of heme B porphyrin ring with a hydroxyethyl farnesyl side group. The chain is Protoheme IX farnesyltransferase from Mycobacteroides abscessus (strain ATCC 19977 / DSM 44196 / CCUG 20993 / CIP 104536 / JCM 13569 / NCTC 13031 / TMC 1543 / L948) (Mycobacterium abscessus).